Here is a 356-residue protein sequence, read N- to C-terminus: Tyrosine recombinase XerS (356 aa).

A Core-binding (CB) domain is found at 16-121; it reads LMPWFVLEYY…ALSSLYKYLT (106 aa). A Tyr recombinase domain is found at 169 to 354; the sequence is KFLDYVENEY…VNDEQKNALD (186 aa). Residues Arg210, Lys234, His306, Arg309, and His332 contribute to the active site. Catalysis depends on Tyr341, which acts as the O-(3'-phospho-DNA)-tyrosine intermediate.

This sequence belongs to the 'phage' integrase family. XerS subfamily.

It is found in the cytoplasm. FtsK is required for recombination. Its function is as follows. Site-specific tyrosine recombinase, which acts by catalyzing the cutting and rejoining of the recombining DNA molecules. Essential to convert dimers of the bacterial chromosome into monomers to permit their segregation at cell division. In Streptococcus thermophilus (strain ATCC BAA-491 / LMD-9), this protein is Tyrosine recombinase XerS.